The sequence spans 202 residues: dITP/XTP pyrophosphatase (202 aa).

Substrate is bound at residue T11 to K16. Catalysis depends on D73, which acts as the Proton acceptor. Mg(2+) is bound at residue D73. Substrate contacts are provided by residues S74, F155–D158, K178, and H183–R184.

The protein belongs to the HAM1 NTPase family. Homodimer. The cofactor is Mg(2+).

The enzyme catalyses XTP + H2O = XMP + diphosphate + H(+). The catalysed reaction is dITP + H2O = dIMP + diphosphate + H(+). It catalyses the reaction ITP + H2O = IMP + diphosphate + H(+). In terms of biological role, pyrophosphatase that catalyzes the hydrolysis of nucleoside triphosphates to their monophosphate derivatives, with a high preference for the non-canonical purine nucleotides XTP (xanthosine triphosphate), dITP (deoxyinosine triphosphate) and ITP. Seems to function as a house-cleaning enzyme that removes non-canonical purine nucleotides from the nucleotide pool, thus preventing their incorporation into DNA/RNA and avoiding chromosomal lesions. The polypeptide is dITP/XTP pyrophosphatase (Lactiplantibacillus plantarum (strain ATCC BAA-793 / NCIMB 8826 / WCFS1) (Lactobacillus plantarum)).